We begin with the raw amino-acid sequence, 524 residues long: Lysine--tRNA ligase (524 aa).

Residues Glu-433 and Glu-440 each contribute to the Mg(2+) site.

The protein belongs to the class-II aminoacyl-tRNA synthetase family. As to quaternary structure, homodimer. Requires Mg(2+) as cofactor.

Its subcellular location is the cytoplasm. It catalyses the reaction tRNA(Lys) + L-lysine + ATP = L-lysyl-tRNA(Lys) + AMP + diphosphate. This Colwellia psychrerythraea (strain 34H / ATCC BAA-681) (Vibrio psychroerythus) protein is Lysine--tRNA ligase.